The sequence spans 896 residues: Translation initiation factor IF-2 (896 aa).

Basic and acidic residues predominate over residues 93–219; sequence VKRDPQEAER…RMAEENEKNW (127 aa). The segment at 93-307 is disordered; sequence VKRDPQEAER…GSALQQGFQK (215 aa). Residues 256-271 are compositionally biased toward basic residues; it reads GRSRSSKAARPAKKGN. Over residues 272–285 the composition is skewed to basic and acidic residues; it reads KHAESKADREEARA. The tr-type G domain occupies 395 to 564; that stretch reads PRAPVVTIMG…LLQAEVLELK (170 aa). Positions 404 to 411 are G1; it reads GHVDHGKT. 404 to 411 is a GTP binding site; that stretch reads GHVDHGKT. Residues 429 to 433 form a G2 region; sequence GITQH. The segment at 450 to 453 is G3; it reads DTPG. GTP contacts are provided by residues 450–454 and 504–507; these read DTPGH and NKID. The tract at residues 504–507 is G4; that stretch reads NKID. Positions 540 to 542 are G5; that stretch reads SAK.

It belongs to the TRAFAC class translation factor GTPase superfamily. Classic translation factor GTPase family. IF-2 subfamily.

The protein resides in the cytoplasm. In terms of biological role, one of the essential components for the initiation of protein synthesis. Protects formylmethionyl-tRNA from spontaneous hydrolysis and promotes its binding to the 30S ribosomal subunits. Also involved in the hydrolysis of GTP during the formation of the 70S ribosomal complex. This Klebsiella pneumoniae subsp. pneumoniae (strain ATCC 700721 / MGH 78578) protein is Translation initiation factor IF-2.